We begin with the raw amino-acid sequence, 179 residues long: Replication restart protein DnaT (179 aa).

Residues serine 151 to glycine 179 are disordered. The segment covering proline 159 to isoleucine 173 has biased composition (basic and acidic residues).

Belongs to the DnaT family. In terms of assembly, homooligomerizes. Interacts with PriB. Component of the replication restart primosome. Primosome assembly occurs via a 'hand-off' mechanism. PriA binds to replication forks, subsequently PriB then DnaT bind; DnaT then displaces ssDNA to generate the helicase loading substrate.

Its function is as follows. Involved in the restart of stalled replication forks, which reloads the replicative helicase on sites other than the origin of replication. Can function in multiple replication restart pathways. Displaces ssDNA from a PriB-ssDNA complex. Probably forms a spiral filament on ssDNA. This Klebsiella pneumoniae (strain 342) protein is Replication restart protein DnaT.